Consider the following 422-residue polypeptide: Putative polyketide beta-ketoacyl synthase 1 (422 aa).

The 415-residue stretch at 2 to 416 folds into the Ketosynthase family 3 (KS3) domain; the sequence is SRRVVVTGIG…GFQSAVVLTG (415 aa). Active-site for beta-ketoacyl synthase activity residues include C169, H309, and H346.

Belongs to the thiolase-like superfamily. Beta-ketoacyl-ACP synthases family.

Involved in developmentally regulated synthesis of a compound biosynthetically related to polyketide antibiotics which is essential for spore color in Streptomyces halstedii. The protein is Putative polyketide beta-ketoacyl synthase 1 (sch1) of Streptomyces halstedii.